The following is a 92-amino-acid chain: Small ribosomal subunit protein uS19 (92 aa).

This sequence belongs to the universal ribosomal protein uS19 family.

Functionally, protein S19 forms a complex with S13 that binds strongly to the 16S ribosomal RNA. The chain is Small ribosomal subunit protein uS19 from Rhizobium rhizogenes (strain K84 / ATCC BAA-868) (Agrobacterium radiobacter).